A 641-amino-acid chain; its full sequence is Threonine--tRNA ligase (641 aa).

A TGS domain is found at 1–61; sequence MIKINLLNHQ…TQDGDLEILA (61 aa). The tract at residues 240-538 is catalytic; that stretch reads DHKRLNKKLD…LIEENKGVFP (299 aa). Zn(2+)-binding residues include cysteine 334, histidine 385, and histidine 515.

It belongs to the class-II aminoacyl-tRNA synthetase family. Homodimer. Requires Zn(2+) as cofactor.

The protein resides in the cytoplasm. It carries out the reaction tRNA(Thr) + L-threonine + ATP = L-threonyl-tRNA(Thr) + AMP + diphosphate + H(+). Catalyzes the attachment of threonine to tRNA(Thr) in a two-step reaction: L-threonine is first activated by ATP to form Thr-AMP and then transferred to the acceptor end of tRNA(Thr). Also edits incorrectly charged L-seryl-tRNA(Thr). This Phytoplasma australiense protein is Threonine--tRNA ligase.